We begin with the raw amino-acid sequence, 456 residues long: Bifunctional protein GlmU (456 aa).

A pyrophosphorylase region spans residues 1 to 229; the sequence is MLNSAMSVVI…ISETDGVNNR (229 aa). Residues 11–14, K25, Q76, 81–82, 103–105, G140, E154, N169, and N227 each bind UDP-N-acetyl-alpha-D-glucosamine; these read LAAG, GT, and YGD. D105 is a Mg(2+) binding site. Residue N227 participates in Mg(2+) binding. Residues 230-250 form a linker region; sequence LQLSRLERIYQAEQAEKLLLS. Residues 251–456 form an N-acetyltransferase region; sequence GVMLRDPARF…QGWQRPVKKK (206 aa). UDP-N-acetyl-alpha-D-glucosamine is bound by residues R333 and K351. The Proton acceptor role is filled by H363. UDP-N-acetyl-alpha-D-glucosamine is bound by residues Y366 and N377. Residues A380, 386-387, S405, A423, and R440 each bind acetyl-CoA; that span reads NY.

This sequence in the N-terminal section; belongs to the N-acetylglucosamine-1-phosphate uridyltransferase family. The protein in the C-terminal section; belongs to the transferase hexapeptide repeat family. As to quaternary structure, homotrimer. The cofactor is Mg(2+).

It localises to the cytoplasm. The enzyme catalyses alpha-D-glucosamine 1-phosphate + acetyl-CoA = N-acetyl-alpha-D-glucosamine 1-phosphate + CoA + H(+). It catalyses the reaction N-acetyl-alpha-D-glucosamine 1-phosphate + UTP + H(+) = UDP-N-acetyl-alpha-D-glucosamine + diphosphate. The protein operates within nucleotide-sugar biosynthesis; UDP-N-acetyl-alpha-D-glucosamine biosynthesis; N-acetyl-alpha-D-glucosamine 1-phosphate from alpha-D-glucosamine 6-phosphate (route II): step 2/2. It participates in nucleotide-sugar biosynthesis; UDP-N-acetyl-alpha-D-glucosamine biosynthesis; UDP-N-acetyl-alpha-D-glucosamine from N-acetyl-alpha-D-glucosamine 1-phosphate: step 1/1. It functions in the pathway bacterial outer membrane biogenesis; LPS lipid A biosynthesis. Its function is as follows. Catalyzes the last two sequential reactions in the de novo biosynthetic pathway for UDP-N-acetylglucosamine (UDP-GlcNAc). The C-terminal domain catalyzes the transfer of acetyl group from acetyl coenzyme A to glucosamine-1-phosphate (GlcN-1-P) to produce N-acetylglucosamine-1-phosphate (GlcNAc-1-P), which is converted into UDP-GlcNAc by the transfer of uridine 5-monophosphate (from uridine 5-triphosphate), a reaction catalyzed by the N-terminal domain. The sequence is that of Bifunctional protein GlmU from Salmonella paratyphi A (strain ATCC 9150 / SARB42).